We begin with the raw amino-acid sequence, 224 residues long: 7-cyano-7-deazaguanine synthase (224 aa).

7-17 (LSGGLDSSTIL) is a binding site for ATP. Zn(2+)-binding residues include Cys-191, Cys-199, Cys-202, and Cys-205.

This sequence belongs to the QueC family. Zn(2+) is required as a cofactor.

It carries out the reaction 7-carboxy-7-deazaguanine + NH4(+) + ATP = 7-cyano-7-deazaguanine + ADP + phosphate + H2O + H(+). It participates in purine metabolism; 7-cyano-7-deazaguanine biosynthesis. Its function is as follows. Catalyzes the ATP-dependent conversion of 7-carboxy-7-deazaguanine (CDG) to 7-cyano-7-deazaguanine (preQ(0)). The chain is 7-cyano-7-deazaguanine synthase from Nostoc punctiforme (strain ATCC 29133 / PCC 73102).